The sequence spans 386 residues: Methionine aminopeptidase 1 (386 aa).

Ala-2 bears the N-acetylalanine mark. The segment at 6–59 adopts a C6H2-type zinc-finger fold; it reads TRVCETDGCSSEAKLQCPTCIKLGIQGSYFCSQECFKGSWATHKLLHKKAKDEK. Positions 9, 14, 22, 25, 36, 40, 48, and 52 each coordinate Zn(2+). His-203 provides a ligand contact to a protein. Asp-220, Asp-231, and His-294 together coordinate Zn(2+). His-301 contributes to the a protein binding site. 2 residues coordinate Zn(2+): Glu-327 and Glu-358.

This sequence belongs to the peptidase M24A family. Methionine aminopeptidase type 1 subfamily. Associates with the 60S ribosomal subunit of the 80S translational complex. The cofactor is Zn(2+). Co(2+) is required as a cofactor. Mn(2+) serves as cofactor. Requires Fe(2+) as cofactor.

Its subcellular location is the cytoplasm. It carries out the reaction Release of N-terminal amino acids, preferentially methionine, from peptides and arylamides.. Its function is as follows. Cotranslationally removes the N-terminal methionine from nascent proteins. The N-terminal methionine is often cleaved when the second residue in the primary sequence is small and uncharged (Met-Ala-, Cys, Gly, Pro, Ser, Thr, or Val). This is Methionine aminopeptidase 1 (METAP1) from Pongo abelii (Sumatran orangutan).